A 154-amino-acid chain; its full sequence is MAIELDLQLAVENEEGLPSQQDFQLWLDKTIPLFQPQAEVTIRIVDEKESHALNHEYRGKDKPTNVLSFPFEAPPGMEIDLLGDLIICRQVVEKEAIEQNKPLLAHWAHMVVHGSLHLLGYDHIEDDEAEEMESLETEIMQGMGYEDPYIAEKE.

Zn(2+) contacts are provided by His113, His117, and His123.

The protein belongs to the endoribonuclease YbeY family. It depends on Zn(2+) as a cofactor.

It is found in the cytoplasm. In terms of biological role, single strand-specific metallo-endoribonuclease involved in late-stage 70S ribosome quality control and in maturation of the 3' terminus of the 16S rRNA. The protein is Endoribonuclease YbeY of Vibrio parahaemolyticus serotype O3:K6 (strain RIMD 2210633).